Here is a 375-residue protein sequence, read N- to C-terminus: 4-hydroxy-3-methylbut-2-en-1-yl diphosphate synthase (flavodoxin) (375 aa).

Positions 268, 271, 303, and 310 each coordinate [4Fe-4S] cluster.

Belongs to the IspG family. Requires [4Fe-4S] cluster as cofactor.

It carries out the reaction (2E)-4-hydroxy-3-methylbut-2-enyl diphosphate + oxidized [flavodoxin] + H2O + 2 H(+) = 2-C-methyl-D-erythritol 2,4-cyclic diphosphate + reduced [flavodoxin]. It functions in the pathway isoprenoid biosynthesis; isopentenyl diphosphate biosynthesis via DXP pathway; isopentenyl diphosphate from 1-deoxy-D-xylulose 5-phosphate: step 5/6. Functionally, converts 2C-methyl-D-erythritol 2,4-cyclodiphosphate (ME-2,4cPP) into 1-hydroxy-2-methyl-2-(E)-butenyl 4-diphosphate. The chain is 4-hydroxy-3-methylbut-2-en-1-yl diphosphate synthase (flavodoxin) from Bacillus velezensis (strain DSM 23117 / BGSC 10A6 / LMG 26770 / FZB42) (Bacillus amyloliquefaciens subsp. plantarum).